The chain runs to 193 residues: uncharacterized protein (193 aa).

This is an uncharacterized protein from Methanocaldococcus jannaschii (strain ATCC 43067 / DSM 2661 / JAL-1 / JCM 10045 / NBRC 100440) (Methanococcus jannaschii).